A 616-amino-acid polypeptide reads, in one-letter code: GPI mannosyltransferase 3 (616 aa).

Over 1–16 (MAHEVHRIKPKLGRTQ) the chain is Cytoplasmic. A helical membrane pass occupies residues 17–37 (IFWVFLAFRVLNAVLTRTFFQ). The Lumenal portion of the chain corresponds to 38–86 (ADEFWQALEPAHWKAFKYGELTWEWKFGVRSYLFPMIFELTYRLVSLSS). The chain crosses the membrane as a helical span at residues 87 to 107 (ILLHYALLLLSTIGSDLLILL). Over 108–136 (LPKYELSWQVAEDLKRLPFDVTRSFEYYG) the chain is Cytoplasmic. Residues 137–157 (VIYAPKIVMAVLASIGEYYIV) form a helical membrane-spanning segment. The Lumenal segment spans residues 158-188 (RFVQKLYLLTLDKRNEKEEEERRSGLSEITK). The helical transmembrane segment at 189–209 (FALLLSLTNFFNCFFITRTFI) threads the bilayer. The Cytoplasmic segment spans residues 210–240 (NSFEMILTSIALYYWDWTGGQMIKESSFTKS). The helical transmembrane segment at 241–261 (LIFAFLACLQRPSSGLIWVIP) threads the bilayer. At 262–278 (SISLILNLVGKKQYHLL) the chain is on the lumenal side. Residues 279–299 (FITFSKVLRSFFLVFTANAII) form a helical membrane-spanning segment. Topologically, residues 300–338 (DMYFYEKVTFPFFRFLKFNFTTPLSKFYGVAPWHFHFFQ) are cytoplasmic. A helical membrane pass occupies residues 339–359 (SLPIVLGASIPAFAFGLFFPL). Over 360 to 392 (SKRSFPKKYLNPFFQVKLTILLNLLVYSTLPHK) the chain is Lumenal. A helical transmembrane segment spans residues 393-413 (EFRFIFPLQPLFILISSFGLL). Residues 414 to 423 (RLDRDYWKRL) lie on the Cytoplasmic side of the membrane. A helical transmembrane segment spans residues 424-444 (SGLKSLLWLVPFVSVFIALLL). Residues 445 to 616 (DTFHESGSIE…DYSDIPAADI (172 aa)) lie on the Lumenal side of the membrane.

Belongs to the glycosyltransferase 22 family. PIGB subfamily.

The protein localises to the endoplasmic reticulum membrane. Its pathway is glycolipid biosynthesis; glycosylphosphatidylinositol-anchor biosynthesis. Its function is as follows. Mannosyltransferase involved in glycosylphosphatidylinositol-anchor biosynthesis. Transfers the third mannose to Man2-GlcN-acyl-PI during GPI precursor assembly. The chain is GPI mannosyltransferase 3 (GPI10) from Saccharomyces cerevisiae (strain ATCC 204508 / S288c) (Baker's yeast).